The primary structure comprises 122 residues: NADH-quinone oxidoreductase subunit A (122 aa).

The next 3 helical transmembrane spans lie at 10–30, 66–86, and 91–111; these read MIVL…LTLG, IFAL…PWAV, and LGLF…VGLA.

This sequence belongs to the complex I subunit 3 family. As to quaternary structure, NDH-1 is composed of 14 different subunits. Subunits NuoA, H, J, K, L, M, N constitute the membrane sector of the complex.

It is found in the cell membrane. It catalyses the reaction a quinone + NADH + 5 H(+)(in) = a quinol + NAD(+) + 4 H(+)(out). Its function is as follows. NDH-1 shuttles electrons from NADH, via FMN and iron-sulfur (Fe-S) centers, to quinones in the respiratory chain. The immediate electron acceptor for the enzyme in this species is believed to be a menaquinone. Couples the redox reaction to proton translocation (for every two electrons transferred, four hydrogen ions are translocated across the cytoplasmic membrane), and thus conserves the redox energy in a proton gradient. This Bacillus cereus (strain ATCC 14579 / DSM 31 / CCUG 7414 / JCM 2152 / NBRC 15305 / NCIMB 9373 / NCTC 2599 / NRRL B-3711) protein is NADH-quinone oxidoreductase subunit A.